The chain runs to 186 residues: Negative modulator of initiation of replication (186 aa).

Residues alanine 93–valine 94 form an interaction with DNA region.

It belongs to the SeqA family. Homodimer. Polymerizes to form helical filaments.

The protein localises to the cytoplasm. In terms of biological role, negative regulator of replication initiation, which contributes to regulation of DNA replication and ensures that replication initiation occurs exactly once per chromosome per cell cycle. Binds to pairs of hemimethylated GATC sequences in the oriC region, thus preventing assembly of replication proteins and re-initiation at newly replicated origins. Repression is relieved when the region becomes fully methylated. The sequence is that of Negative modulator of initiation of replication from Shewanella halifaxensis (strain HAW-EB4).